A 311-amino-acid chain; its full sequence is Ribosomal RNA small subunit methyltransferase H (311 aa).

S-adenosyl-L-methionine-binding positions include 41 to 43 (GGH), aspartate 61, phenylalanine 85, aspartate 102, and glutamine 109.

This sequence belongs to the methyltransferase superfamily. RsmH family.

The protein localises to the cytoplasm. It carries out the reaction cytidine(1402) in 16S rRNA + S-adenosyl-L-methionine = N(4)-methylcytidine(1402) in 16S rRNA + S-adenosyl-L-homocysteine + H(+). Its function is as follows. Specifically methylates the N4 position of cytidine in position 1402 (C1402) of 16S rRNA. The protein is Ribosomal RNA small subunit methyltransferase H of Paracidovorax citrulli (strain AAC00-1) (Acidovorax citrulli).